A 120-amino-acid polypeptide reads, in one-letter code: SPbeta prophage-derived DSR anti-defense 1 (120 aa).

The protein belongs to the DSR anti-defense 1 family. Interacts with Bacillus subtilis DSR2 (via C-terminus) in a 2:4 ratio; this interaction leads to the absence of activation of the NADase defense activity of DSR2.

Counteracts the defense-associated sirtuin 2 (DSR2) defense system of the host. Inhibits the NADase activity of host DSR2 by competing with the tail tube protein that normally activates DSR2. The sequence is that of SPbeta prophage-derived DSR anti-defense 1 (yotI) from Bacillus subtilis (strain 168).